A 179-amino-acid chain; its full sequence is ADP-ribosylation factor (179 aa).

A lipid anchor (N-myristoyl glycine) is attached at glycine 2. GTP is bound by residues 24–31, 67–71, and 126–129; these read GLDAAGKT, DVGGQ, and NKQD.

This sequence belongs to the small GTPase superfamily. Arf family.

The protein localises to the golgi apparatus. Functionally, GTP-binding protein involved in protein trafficking; may modulate vesicle budding and uncoating within the Golgi apparatus. The protein is ADP-ribosylation factor (ARF1) of Candida albicans (strain SC5314 / ATCC MYA-2876) (Yeast).